The sequence spans 299 residues: Ribosomal RNA small subunit methyltransferase H 1 (299 aa).

S-adenosyl-L-methionine-binding positions include 31–33 (GGH), D50, F76, D97, and Q104.

The protein belongs to the methyltransferase superfamily. RsmH family.

The protein resides in the cytoplasm. It carries out the reaction cytidine(1402) in 16S rRNA + S-adenosyl-L-methionine = N(4)-methylcytidine(1402) in 16S rRNA + S-adenosyl-L-homocysteine + H(+). Specifically methylates the N4 position of cytidine in position 1402 (C1402) of 16S rRNA. This Acholeplasma laidlawii (strain PG-8A) protein is Ribosomal RNA small subunit methyltransferase H 1.